Here is a 254-residue protein sequence, read N- to C-terminus: Peroxisomal membrane protein 11 homolog (254 aa).

Over 1–91 (MAGILSKPNY…ILALFKVKNP (91 aa)) the chain is Cytoplasmic. The chain crosses the membrane as a helical span at residues 92–112 (FAFLNILALIRQSGMYFYWVF). The Lumenal portion of the chain corresponds to 113 to 227 (DHLILGTNIG…DLIIASTLLK (115 aa)). Residues 228 to 248 (IYPFSQGTIGISGIISALIGA) form a helical membrane-spanning segment. Residues 249–254 (YQMWPK) are Cytoplasmic-facing.

It belongs to the peroxin-11 family.

It is found in the peroxisome membrane. Its function is as follows. Involved in peroxisomal proliferation. Could participate in peroxisomal elongation or fission. May be involved in parceling of peroxisomes into regular quanta. This is Peroxisomal membrane protein 11 homolog (pex11) from Dictyostelium discoideum (Social amoeba).